Reading from the N-terminus, the 412-residue chain is MISQIDKTELLERFLHYVSFHTQSKPHAKHSPSSVGQMKLAMQLQKELIQLGLENVEVSKYAVVTAFLPANDPNLTKTIGLVAHLDTSPQCSGKNVRPEVIEEYRGGDIALGIGEEFISPVYYSFMQKLVGQTLIVTDGTTLLGADNKAGIAEIMTALSILQKENIPHCNIRVAFTPDEEIGLGIHYFPMEKFSCDWAYTIDGGEVGELEYENFNAATAKVRFFGRNIHTGYAKGKMLNALTLACEFQQVFPVDEVPEKTDGKVGFYHLEDFSGDIEQVELTYLIRDFDEQNFAQRKAFIKNQVEKFNAKKGLKKPIELEIQDSYQNMYDVVKNVPQSIELADRAMKAVGIKPNHKPIRGGTDGAFLASKGLACPNIFTGGYNFHSKHELVSLQGMENTVQVIIEMLKCKDL.

H84 is a binding site for Zn(2+). D86 is a catalytic residue. Position 146 (D146) interacts with Zn(2+). E179 serves as the catalytic Proton acceptor. The Zn(2+) site is built by E180, D202, and H385.

This sequence belongs to the peptidase M20B family. Requires Zn(2+) as cofactor.

Its subcellular location is the cytoplasm. It catalyses the reaction Release of the N-terminal residue from a tripeptide.. Its function is as follows. Cleaves the N-terminal amino acid of tripeptides. The chain is Peptidase T from Haemophilus influenzae (strain PittGG).